Here is a 188-residue protein sequence, read N- to C-terminus: Casparian strip membrane protein 1 (188 aa).

At 1–24 (MKAGALELGHASKTTKSGVNRGMS) the chain is on the cytoplasmic side. A helical membrane pass occupies residues 25 to 45 (ILDLFIRIIAIIATLGSAIAM). Over 46 to 72 (GTTNETLPFFTQFVRFKAKYSDLPTFT) the chain is Extracellular. N-linked (GlcNAc...) asparagine glycosylation is present at N49. Residues 73 to 93 (FFVVANAIVSAYLVLSLGLSI) traverse the membrane as a helical segment. At 94 to 105 (YHIMRSRAQATR) the chain is on the cytoplasmic side. A helical transmembrane segment spans residues 106–126 (IALIFFDAAMLGLLTGGASAS). Residues 127 to 159 (AAIVYLAHKGNRKTNWFPICQQYDSFCHRTSGS) are Extracellular-facing. Residues 160–180 (LVGSFAGSVLIILLIFLSAIA) form a helical membrane-spanning segment. The Cytoplasmic portion of the chain corresponds to 181–188 (LSRQSLNH).

Belongs to the Casparian strip membrane proteins (CASP) family. As to quaternary structure, homodimer and heterodimers.

The protein localises to the cell membrane. Regulates membrane-cell wall junctions and localized cell wall deposition. Required for establishment of the Casparian strip membrane domain (CSD) and the subsequent formation of Casparian strips, a cell wall modification of the root endodermis that determines an apoplastic barrier between the intraorganismal apoplasm and the extraorganismal apoplasm and prevents lateral diffusion. In Solanum tuberosum (Potato), this protein is Casparian strip membrane protein 1.